A 163-amino-acid polypeptide reads, in one-letter code: 2-C-methyl-D-erythritol 2,4-cyclodiphosphate synthase (163 aa).

The a divalent metal cation site is built by D12 and H14. 4-CDP-2-C-methyl-D-erythritol 2-phosphate contacts are provided by residues D12–H14 and H38–S39. A divalent metal cation is bound at residue H46. 4-CDP-2-C-methyl-D-erythritol 2-phosphate-binding positions include D60 to G62, F65 to D69, T136 to E139, F143, and R146.

It belongs to the IspF family. Homotrimer. The cofactor is a divalent metal cation.

It catalyses the reaction 4-CDP-2-C-methyl-D-erythritol 2-phosphate = 2-C-methyl-D-erythritol 2,4-cyclic diphosphate + CMP. It participates in isoprenoid biosynthesis; isopentenyl diphosphate biosynthesis via DXP pathway; isopentenyl diphosphate from 1-deoxy-D-xylulose 5-phosphate: step 4/6. Functionally, involved in the biosynthesis of isopentenyl diphosphate (IPP) and dimethylallyl diphosphate (DMAPP), two major building blocks of isoprenoid compounds. Catalyzes the conversion of 4-diphosphocytidyl-2-C-methyl-D-erythritol 2-phosphate (CDP-ME2P) to 2-C-methyl-D-erythritol 2,4-cyclodiphosphate (ME-CPP) with a corresponding release of cytidine 5-monophosphate (CMP). This chain is 2-C-methyl-D-erythritol 2,4-cyclodiphosphate synthase, found in Acinetobacter baylyi (strain ATCC 33305 / BD413 / ADP1).